Here is a 153-residue protein sequence, read N- to C-terminus: Arginine repressor (153 aa).

It belongs to the ArgR family.

It localises to the cytoplasm. It functions in the pathway amino-acid biosynthesis; L-arginine biosynthesis [regulation]. In terms of biological role, regulates arginine biosynthesis genes. The sequence is that of Arginine repressor from Acetivibrio thermocellus (strain ATCC 27405 / DSM 1237 / JCM 9322 / NBRC 103400 / NCIMB 10682 / NRRL B-4536 / VPI 7372) (Clostridium thermocellum).